The chain runs to 188 residues: Protease-associated domain-containing protein 1 (188 aa).

The first 21 residues, 1 to 21, serve as a signal peptide directing secretion; the sequence is MVPGAAGWCCLVLWLPACVAA. The 81-residue stretch at 83-163 folds into the PA domain; it reads IQDQIALVER…RSLEQHGLPW (81 aa). Asn171 carries N-linked (GlcNAc...) asparagine glycosylation.

Post-translationally, N-glycosylated; required for efficient secretion. As to expression, highly expressed in skeletal muscle, heart and liver. Expressed at intermediate level in kidney.

It is found in the secreted. In terms of biological role, plays a role in the modulation of physical activity and adiposity. This Homo sapiens (Human) protein is Protease-associated domain-containing protein 1.